Reading from the N-terminus, the 421-residue chain is Serine--tRNA ligase (421 aa).

Residue 230–232 (TAE) participates in L-serine binding. 261-263 (RRE) contacts ATP. L-serine is bound at residue Glu-284. Residue 348–351 (EISS) participates in ATP binding. Ser-383 serves as a coordination point for L-serine.

This sequence belongs to the class-II aminoacyl-tRNA synthetase family. Type-1 seryl-tRNA synthetase subfamily. Homodimer. The tRNA molecule binds across the dimer.

It localises to the cytoplasm. The enzyme catalyses tRNA(Ser) + L-serine + ATP = L-seryl-tRNA(Ser) + AMP + diphosphate + H(+). It catalyses the reaction tRNA(Sec) + L-serine + ATP = L-seryl-tRNA(Sec) + AMP + diphosphate + H(+). The protein operates within aminoacyl-tRNA biosynthesis; selenocysteinyl-tRNA(Sec) biosynthesis; L-seryl-tRNA(Sec) from L-serine and tRNA(Sec): step 1/1. Catalyzes the attachment of serine to tRNA(Ser). Is also able to aminoacylate tRNA(Sec) with serine, to form the misacylated tRNA L-seryl-tRNA(Sec), which will be further converted into selenocysteinyl-tRNA(Sec). In Finegoldia magna (strain ATCC 29328 / DSM 20472 / WAL 2508) (Peptostreptococcus magnus), this protein is Serine--tRNA ligase.